Consider the following 95-residue polypeptide: Progonadoliberin-1 (95 aa).

The first 25 residues, 1–25, serve as a signal peptide directing secretion; sequence MAPQTSNLWILLLLVVVMMMSQGCC. Q26 carries the post-translational modification Pyrrolidone carboxylic acid. The residue at position 35 (G35) is a Glycine amide.

This sequence belongs to the GnRH family.

It is found in the secreted. In terms of biological role, stimulates the secretion of gonadotropins. The protein is Progonadoliberin-1 (gnrh1) of Sparus aurata (Gilthead sea bream).